We begin with the raw amino-acid sequence, 708 residues long: WD repeat-containing and planar cell polarity effector protein fritz homolog (708 aa).

WD repeat units lie at residues 303-342 and 343-382; these read PLRS…TLLA and QADL…IRAQ.

The protein belongs to the WD repeat fritz family. In terms of assembly, interacts with sept2-a. Interacts with intu and fuz; fuz, intu and wdpcp probably form the core CPLANE (ciliogenesis and planar polarity effectors) complex.

The protein localises to the cell membrane. It is found in the cytoplasm. The protein resides in the cytoskeleton. It localises to the cilium axoneme. Its subcellular location is the cilium basal body. Probable effector of the planar cell polarity signaling pathway which regulates the septin cytoskeleton in both ciliogenesis and collective cell movements including covergent extension during gastrulation. Controls cell shape but not polarization during convergent extension. Proposed to function as core component of the CPLANE (ciliogenesis and planar polarity effectors) complex involved in the recruitment of peripheral IFT-A proteins to basal bodies. This chain is WD repeat-containing and planar cell polarity effector protein fritz homolog (wdpcp), found in Xenopus laevis (African clawed frog).